We begin with the raw amino-acid sequence, 141 residues long: Hemoglobin subunit alpha (141 aa).

Positions 1–141 (VLSPADKTNV…VSTVLTSKYR (141 aa)) constitute a Globin domain. A Phosphoserine modification is found at serine 3. At lysine 7 the chain carries N6-succinyllysine. Residue threonine 8 is modified to Phosphothreonine. An N6-succinyllysine modification is found at lysine 11. Lysine 16 is subject to N6-acetyllysine; alternate. Lysine 16 carries the post-translational modification N6-succinyllysine; alternate. Phosphoserine is present on serine 35. The residue at position 40 (lysine 40) is an N6-succinyllysine. O2 is bound at residue histidine 58. Histidine 87 contacts heme b. Serine 102 is subject to Phosphoserine. Residue threonine 108 is modified to Phosphothreonine. A phosphoserine mark is found at serine 124 and serine 131. A phosphothreonine mark is found at threonine 134 and threonine 137. Phosphoserine is present on serine 138.

It belongs to the globin family. As to quaternary structure, heterotetramer of two alpha chains and two beta chains. As to expression, red blood cells.

Functionally, involved in oxygen transport from the lung to the various peripheral tissues. Its function is as follows. Hemopressin acts as an antagonist peptide of the cannabinoid receptor CNR1. Hemopressin-binding efficiently blocks cannabinoid receptor CNR1 and subsequent signaling. This is Hemoglobin subunit alpha (HBA) from Physeter macrocephalus (Sperm whale).